The following is a 275-amino-acid chain: Large ribosomal subunit protein uL2 (275 aa).

Polar residues predominate over residues 38–53 (SSKAGRNNNGRITTRH). Disordered stretches follow at residues 38–60 (SSKA…GHKQ) and 224–257 (AMNP…KGFR).

The protein belongs to the universal ribosomal protein uL2 family. As to quaternary structure, part of the 50S ribosomal subunit. Forms a bridge to the 30S subunit in the 70S ribosome.

Its function is as follows. One of the primary rRNA binding proteins. Required for association of the 30S and 50S subunits to form the 70S ribosome, for tRNA binding and peptide bond formation. It has been suggested to have peptidyltransferase activity; this is somewhat controversial. Makes several contacts with the 16S rRNA in the 70S ribosome. The chain is Large ribosomal subunit protein uL2 from Burkholderia pseudomallei (strain 1106a).